The following is a 587-amino-acid chain: MAARSLMRILLVGLGLTLATIISGALVTISASATVCSSWPLCLEELVQSQNPLVWISLLHRLFVALALLAVFAGLVAVWRSSDTAGLPRITAGIAAAFFLLQALAGALLVWGVPAMVADVWHLSGALLAFGAQSLTIALIAVPTPATPERLAGRAAQMQRRLRSLAWWSAAAAGVAALAIGARSVVPGFGMMTAVPTNSVSAVGFAALLSVWMALEARRRLRPVAETPALALALPRYSLFLPALALLALLGAFIPVAGHLISLTAIALLWAATIIAAVILQRVPFSFATATAGVRSQPAWRTVVADYISLTKPKVISLLLVTTLTTMFITEAGLPSWWLVIWTMIGGYLAAGGAGAINCAFDSDIDINMGRTSRRPVPSGRISRRAAFIFGLILSVLSIIVLWVFTTPLAAFFALLGIIYYAWFYTGWLKRSTWQNIIIGGGAGAIPPLVGWTAVTGSVSLMAVVLFAIIFYWTPPHFWALALVKQKDYARAGVPMLPVVAGEAETRWQILVYSAIMVAVSLLPVAIGAMSWIYLIGAVVLGLRFMRDAWAVWRVGDQAAIWGLYKYSLLYLALVFAAMVADRLIIG.

Residues 1 to 317 (MAARSLMRIL…ISLTKPKVIS (317 aa)) are unknown. The next 16 helical transmembrane spans lie at 9–29 (ILLV…LVTI), 58–78 (LLHR…LVAV), 93–113 (GIAA…VWGV), 123–143 (LSGA…IAVP), 172–192 (AAGV…FGMM), 195–215 (VPTN…WMAL), 238–258 (SLFL…PVAG), 260–280 (LISL…AVIL), 315–335 (VISL…AGLP), 337–357 (WWLV…AGAI), 386–406 (AAFI…WVFT), 409–429 (LAAF…TGWL), 437–457 (IIIG…AVTG), 464–484 (VVLF…LALV), 522–542 (LLPV…VVLG), and 560–580 (AIWG…AAMV). A protoheme IX prenyltransferase region spans residues 318 to 587 (LLLVTTLTTM…AMVADRLIIG (270 aa)).

The protein in the C-terminal section; belongs to the UbiA prenyltransferase family. Protoheme IX farnesyltransferase subfamily.

Its subcellular location is the cell membrane. The catalysed reaction is heme b + (2E,6E)-farnesyl diphosphate + H2O = Fe(II)-heme o + diphosphate. The protein operates within porphyrin-containing compound metabolism; heme O biosynthesis; heme O from protoheme: step 1/1. Functionally, converts heme B (protoheme IX) to heme O by substitution of the vinyl group on carbon 2 of heme B porphyrin ring with a hydroxyethyl farnesyl side group. The polypeptide is Protoheme IX farnesyltransferase (ctaB) (Chloroflexus aurantiacus (strain ATCC 29366 / DSM 635 / J-10-fl)).